The chain runs to 130 residues: Small ribosomal subunit protein uS11 (130 aa).

Residues 108–130 are disordered; it reads IEDVTPIPHDGTGRPGGKRGRRV.

It belongs to the universal ribosomal protein uS11 family. As to quaternary structure, part of the 30S ribosomal subunit.

In terms of biological role, located on the platform of the 30S subunit. The polypeptide is Small ribosomal subunit protein uS11 (Methanothermobacter thermautotrophicus (strain ATCC 29096 / DSM 1053 / JCM 10044 / NBRC 100330 / Delta H) (Methanobacterium thermoautotrophicum)).